We begin with the raw amino-acid sequence, 492 residues long: MRTVLLSKHDELYLEKCAQENQFSYGIIVGHQADLTKSVVVHLARNNEEDADLEDLSEVRLTISDINSQALASQWLSASKMCPGSFDVIGIFVSSVRSDVVNEQSAEFKNAKKLFSDIYDLLLKSNSSFGVYTTDIAQTDFVFLSYSLADKKVLCKNYSYGNGGTFTNMEFRFVDKPFEWIQLECSYDFDDVLPILDSSRRVNIEDQFQSMIVSVRKNLLASEVFLQNEVVEDTIDLQAYIKKKKTKVDKLQPTSTTGGTATASSNTTDSLPRLASEGIIGGTETIRASIVLPMKCQLSKPTDIKVREFSGTLHMSGIITSKVFCNPRNSIADVKRFLRDDVLRSLITRIQVYCDGLTDPYVTNEALYISEPPRRVFFSLPSEGPSASVGAVVQFSEYLFRGEAPTVVVAQAKQILDVDLDPETISVEAEGLPDDTHFNNCKMDADCIDDSGIMTSSMPKPELSRSLYMVGIAVALLVLLSSVALHFVLAER.

Residues 251 to 270 form a disordered region; the sequence is LQPTSTTGGTATASSNTTDS. Residues 254 to 268 are compositionally biased toward low complexity; it reads TSTTGGTATASSNTT. The chain crosses the membrane as a helical span at residues 469–489; sequence MVGIAVALLVLLSSVALHFVL.

The protein belongs to the ODR-4 family.

The protein resides in the membrane. Its function is as follows. May play a role in the trafficking of a subset of G-protein coupled receptors. The polypeptide is Protein odr-4 homolog (Drosophila melanogaster (Fruit fly)).